Here is a 275-residue protein sequence, read N- to C-terminus: 2,3,4,5-tetrahydropyridine-2,6-dicarboxylate N-succinyltransferase (275 aa).

Residues R108 and D145 each contribute to the substrate site.

It belongs to the transferase hexapeptide repeat family. Homotrimer.

It is found in the cytoplasm. The enzyme catalyses (S)-2,3,4,5-tetrahydrodipicolinate + succinyl-CoA + H2O = (S)-2-succinylamino-6-oxoheptanedioate + CoA. Its pathway is amino-acid biosynthesis; L-lysine biosynthesis via DAP pathway; LL-2,6-diaminopimelate from (S)-tetrahydrodipicolinate (succinylase route): step 1/3. This chain is 2,3,4,5-tetrahydropyridine-2,6-dicarboxylate N-succinyltransferase, found in Jannaschia sp. (strain CCS1).